Consider the following 409-residue polypeptide: Protein a6 (409 aa).

A Phosphoserine modification is found at S86. Over residues 106 to 120 the composition is skewed to basic residues; sequence RAHRTGRRQAPRRAA. Positions 106–165 are disordered; sequence RAHRTGRRQAPRRAATHSYPVTDSILITSDDEHNEQEPSSTARVRSQLSMRSPPPLAPLT. T133 carries the phosphothreonine modification. Position 134 is a phosphoserine (S134). A compositionally biased stretch (polar residues) spans 142–155; it reads EPSSTARVRSQLSM.

In Drosophila melanogaster (Fruit fly), this protein is Protein a6 (a6).